The primary structure comprises 223 residues: Uracil-DNA glycosylase (223 aa).

Asp-61 acts as the Proton acceptor in catalysis.

The protein belongs to the uracil-DNA glycosylase (UDG) superfamily. UNG family.

The protein resides in the cytoplasm. The catalysed reaction is Hydrolyzes single-stranded DNA or mismatched double-stranded DNA and polynucleotides, releasing free uracil.. Functionally, excises uracil residues from the DNA which can arise as a result of misincorporation of dUMP residues by DNA polymerase or due to deamination of cytosine. The protein is Uracil-DNA glycosylase of Haemophilus ducreyi (strain 35000HP / ATCC 700724).